Reading from the N-terminus, the 123-residue chain is Small ribosomal subunit protein uS12 (123 aa).

Asp-89 carries the post-translational modification 3-methylthioaspartic acid.

Belongs to the universal ribosomal protein uS12 family. As to quaternary structure, part of the 30S ribosomal subunit. Contacts proteins S8 and S17. May interact with IF1 in the 30S initiation complex.

Its function is as follows. With S4 and S5 plays an important role in translational accuracy. Functionally, interacts with and stabilizes bases of the 16S rRNA that are involved in tRNA selection in the A site and with the mRNA backbone. Located at the interface of the 30S and 50S subunits, it traverses the body of the 30S subunit contacting proteins on the other side and probably holding the rRNA structure together. The combined cluster of proteins S8, S12 and S17 appears to hold together the shoulder and platform of the 30S subunit. In Syntrophus aciditrophicus (strain SB), this protein is Small ribosomal subunit protein uS12.